Reading from the N-terminus, the 468-residue chain is 3-isopropylmalate dehydratase large subunit (468 aa).

Cys349, Cys409, and Cys412 together coordinate [4Fe-4S] cluster.

This sequence belongs to the aconitase/IPM isomerase family. LeuC type 1 subfamily. As to quaternary structure, heterodimer of LeuC and LeuD. It depends on [4Fe-4S] cluster as a cofactor.

It carries out the reaction (2R,3S)-3-isopropylmalate = (2S)-2-isopropylmalate. Its pathway is amino-acid biosynthesis; L-leucine biosynthesis; L-leucine from 3-methyl-2-oxobutanoate: step 2/4. In terms of biological role, catalyzes the isomerization between 2-isopropylmalate and 3-isopropylmalate, via the formation of 2-isopropylmaleate. In Shewanella baltica (strain OS223), this protein is 3-isopropylmalate dehydratase large subunit.